We begin with the raw amino-acid sequence, 99 residues long: uncharacterized protein (99 aa).

The signal sequence occupies residues 1 to 19 (MLGMIRWVVEGTLVAMLLS). Positions 71-99 (DGFGRINDSGPKRRGRDQSQYSSRFVELD) are disordered.

The protein localises to the cytoplasm. This is an uncharacterized protein from Saccharomyces cerevisiae (strain ATCC 204508 / S288c) (Baker's yeast).